Here is a 487-residue protein sequence, read N- to C-terminus: Protein nucleotidyltransferase YdiU (487 aa).

ATP is bound by residues G91, G93, R94, K114, D126, G127, R177, and R184. Catalysis depends on D253, which acts as the Proton acceptor. Mg(2+) is bound by residues N254 and D263. Residue D263 coordinates ATP.

This sequence belongs to the SELO family. Mg(2+) serves as cofactor. Mn(2+) is required as a cofactor.

It catalyses the reaction L-seryl-[protein] + ATP = 3-O-(5'-adenylyl)-L-seryl-[protein] + diphosphate. The catalysed reaction is L-threonyl-[protein] + ATP = 3-O-(5'-adenylyl)-L-threonyl-[protein] + diphosphate. The enzyme catalyses L-tyrosyl-[protein] + ATP = O-(5'-adenylyl)-L-tyrosyl-[protein] + diphosphate. It carries out the reaction L-histidyl-[protein] + UTP = N(tele)-(5'-uridylyl)-L-histidyl-[protein] + diphosphate. It catalyses the reaction L-seryl-[protein] + UTP = O-(5'-uridylyl)-L-seryl-[protein] + diphosphate. The catalysed reaction is L-tyrosyl-[protein] + UTP = O-(5'-uridylyl)-L-tyrosyl-[protein] + diphosphate. Its function is as follows. Nucleotidyltransferase involved in the post-translational modification of proteins. It can catalyze the addition of adenosine monophosphate (AMP) or uridine monophosphate (UMP) to a protein, resulting in modifications known as AMPylation and UMPylation. The sequence is that of Protein nucleotidyltransferase YdiU from Yersinia pestis (strain Pestoides F).